We begin with the raw amino-acid sequence, 238 residues long: Ion-translocating oxidoreductase complex subunit E (238 aa).

Helical transmembrane passes span 41 to 61 (LGLG…VSLV), 71 to 91 (LPAF…LMQA), 95 to 115 (ELYQ…VILG), 130 to 150 (SFDG…LGGL), and 184 to 204 (GFLL…LIAL).

The protein belongs to the NqrDE/RnfAE family. The complex is composed of six subunits: RnfA, RnfB, RnfC, RnfD, RnfE and RnfG.

Its subcellular location is the cell inner membrane. Part of a membrane-bound complex that couples electron transfer with translocation of ions across the membrane. The protein is Ion-translocating oxidoreductase complex subunit E of Pseudomonas aeruginosa (strain LESB58).